A 443-amino-acid polypeptide reads, in one-letter code: Protoheme IX farnesyltransferase, mitochondrial (443 aa).

7 consecutive transmembrane segments (helical) span residues 174–194, 235–255, 257–277, 280–300, 309–329, 364–384, and 411–431; these read AAGF…LTSV, LAVS…TLGV, PLTG…YTPL, ISIA…VMGW, AGAF…FNAL, LLVL…FPIM, and LFFC…TCKR.

The protein belongs to the UbiA prenyltransferase family.

It localises to the mitochondrion membrane. It carries out the reaction heme b + (2E,6E)-farnesyl diphosphate + H2O = Fe(II)-heme o + diphosphate. Functionally, converts protoheme IX and farnesyl diphosphate to heme O. The sequence is that of Protoheme IX farnesyltransferase, mitochondrial (COX10) from Homo sapiens (Human).